A 286-amino-acid chain; its full sequence is 4-hydroxybenzoate octaprenyltransferase (286 aa).

The next 7 membrane-spanning stretches (helical) occupy residues 21–40 (GTLL…AGGM), 95–115 (ILFV…NGLV), 142–162 (FLGI…TGEV), 167–187 (WWLF…YAMV), 210–230 (QIIG…GWSA), 235–255 (LYGL…MLIF), and 266–286 (FLNN…DYLI).

It belongs to the UbiA prenyltransferase family. Requires Mg(2+) as cofactor.

The protein resides in the cell inner membrane. It catalyses the reaction all-trans-octaprenyl diphosphate + 4-hydroxybenzoate = 4-hydroxy-3-(all-trans-octaprenyl)benzoate + diphosphate. It participates in cofactor biosynthesis; ubiquinone biosynthesis. Catalyzes the prenylation of para-hydroxybenzoate (PHB) with an all-trans polyprenyl group. Mediates the second step in the final reaction sequence of ubiquinone-8 (UQ-8) biosynthesis, which is the condensation of the polyisoprenoid side chain with PHB, generating the first membrane-bound Q intermediate 3-octaprenyl-4-hydroxybenzoate. The sequence is that of 4-hydroxybenzoate octaprenyltransferase from Shewanella baltica (strain OS223).